Consider the following 399-residue polypeptide: Acetate kinase (399 aa).

Asn-10 provides a ligand contact to Mg(2+). ATP is bound at residue Lys-17. Arg-91 serves as a coordination point for substrate. The Proton donor/acceptor role is filled by Asp-148. ATP contacts are provided by residues 208–212, 283–285, and 331–335; these read HLGNG, DCR, and GIGEN. Position 385 (Glu-385) interacts with Mg(2+).

It belongs to the acetokinase family. Homodimer. The cofactor is Mg(2+). It depends on Mn(2+) as a cofactor.

It is found in the cytoplasm. It carries out the reaction acetate + ATP = acetyl phosphate + ADP. It functions in the pathway metabolic intermediate biosynthesis; acetyl-CoA biosynthesis; acetyl-CoA from acetate: step 1/2. Its function is as follows. Catalyzes the formation of acetyl phosphate from acetate and ATP. Can also catalyze the reverse reaction. This chain is Acetate kinase, found in Shewanella oneidensis (strain ATCC 700550 / JCM 31522 / CIP 106686 / LMG 19005 / NCIMB 14063 / MR-1).